We begin with the raw amino-acid sequence, 502 residues long: Facilitated trehalose transporter Tret1 (502 aa).

At 1–38 (MGVENTKQTMSSQNIKPAKDSDDVLHTQFKEVKRSPMR) the chain is on the cytoplasmic side. A helical membrane pass occupies residues 39–59 (YTMQLLAALAVSMASLMIGYS). The Extracellular segment spans residues 60–83 (SSYTSPALVSMRDNTTATFEVTMD). Asparagine 73 carries N-linked (GlcNAc...) asparagine glycosylation. Residues 84–104 (MAMWIGSIMPLSALIGGIIGG) form a helical membrane-spanning segment. At 105–120 (PCIEYIGRRNTILSTA) the chain is on the cytoplasmic side. A helical transmembrane segment spans residues 121–141 (LPFLAGWLFIALATNVAMILV). The Extracellular portion of the chain corresponds to 142–144 (GRS). A helical membrane pass occupies residues 145–165 (ICGFCVGVASLSLPVYLGESI). Topologically, residues 166-172 (QPEVRGS) are cytoplasmic. Residues 173–193 (LGLLPTVFGNSGILMCFTAGM) form a helical membrane-spanning segment. The Extracellular segment spans residues 194 to 199 (YLAWRN). A helical transmembrane segment spans residues 200–220 (LALLGACIPIIFLILMFLIPE). Residues 221 to 282 (TPRWYISKGK…ELFRKNHIKP (62 aa)) are Cytoplasmic-facing. The helical transmembrane segment at 283-303 (VFISLGLMFFQQFSGINAVIF) threads the bilayer. At 304–319 (YTVQIFKDSGSTVDEN) the chain is on the extracellular side. The N-linked (GlcNAc...) asparagine glycan is linked to asparagine 319. The helical transmembrane segment at 320–340 (LSTIIVGLVNFISTFVAAMII) threads the bilayer. The Cytoplasmic portion of the chain corresponds to 341–346 (DRLGRK). Residues 347 to 367 (MLLYISSILMCITLFTFGTFF) traverse the membrane as a helical segment. Residues 368–376 (YVKELMDVT) lie on the Extracellular side of the membrane. A helical transmembrane segment spans residues 377-397 (AFGWIPLMSLIVYVIGFSFGF). At 398–410 (GPIPWLMMGEILP) the chain is on the cytoplasmic side. Residues 411–433 (VKIRGTAASVATAFNWSCTFVVT) traverse the membrane as a helical segment. At 434-446 (KTYEDLVLHIGPY) the chain is on the extracellular side. Residues 447-467 (GTFWLFGTLVAVAFIFVIICV) form a helical membrane-spanning segment. The Cytoplasmic portion of the chain corresponds to 468 to 502 (PETRGRSLEEIERRFAGPVRRTSAIANLKPMPITI).

This sequence belongs to the major facilitator superfamily. Sugar transporter (TC 2.A.1.1) family. Trehalose transporter subfamily.

Its subcellular location is the cell membrane. Functionally, moderate-capacity facilitative transporter for trehalose. Does not transport maltose, sucrose or lactose. Mediates the bidirectional transfer of trehalose. Responsible for the transport of trehalose synthesized in the fat body and the incorporation of trehalose into other tissues that require a carbon source, thereby regulating trehalose levels in the hemolymph. This is Facilitated trehalose transporter Tret1 from Apis mellifera ligustica (Common honeybee).